The chain runs to 959 residues: Probable LRR receptor-like serine/threonine-protein kinase At5g37450 (959 aa).

The first 24 residues, 1–24 (MKEMMGVVGIILVVSSCCLSLLDA), serve as a signal peptide directing secretion. Residues 25-565 (QEITHPTDVS…SGMSIGVSVG (541 aa)) are Extracellular-facing. Asn-62, Asn-88, Asn-102, and Asn-123 each carry an N-linked (GlcNAc...) asparagine glycan. 9 LRR repeats span residues 79-100 (VKEL…LGLL), 101-124 (SNLT…LGNL), 125-148 (THLI…LGSL), 149-172 (SNLL…LANL), 173-198 (KKLK…TLTN), 200-220 (LHFL…LAQM), 221-244 (PSLR…SYGS), 246-268 (PNLV…LSKS), and 269-292 (LVLY…KFSA). Asn-182 is a glycosylation site (N-linked (GlcNAc...) asparagine). 6 N-linked (GlcNAc...) asparagine glycosylation sites follow: Asn-293, Asn-311, Asn-327, Asn-358, Asn-369, and Asn-510. 3 LRR repeats span residues 294 to 314 (ITTI…NFSG), 315 to 338 (LPRL…IWEN), and 341 to 366 (LKAE…LLNP). The chain crosses the membrane as a helical span at residues 566–586 (IIIGAIAFFLVLSSLALVFFI). The Cytoplasmic portion of the chain corresponds to 587-959 (KRSKRKRKTR…SGVIPSIAPR (373 aa)). The Protein kinase domain occupies 631–906 (FSDLSQIGRG…RELENIYGLI (276 aa)). Residues 637 to 645 (IGRGGYGKV) and Lys-659 contribute to the ATP site. Asp-755 functions as the Proton acceptor in the catalytic mechanism.

The protein belongs to the protein kinase superfamily. Ser/Thr protein kinase family.

It is found in the membrane. It catalyses the reaction L-seryl-[protein] + ATP = O-phospho-L-seryl-[protein] + ADP + H(+). It carries out the reaction L-threonyl-[protein] + ATP = O-phospho-L-threonyl-[protein] + ADP + H(+). This chain is Probable LRR receptor-like serine/threonine-protein kinase At5g37450, found in Arabidopsis thaliana (Mouse-ear cress).